Reading from the N-terminus, the 413-residue chain is Endoplasmic reticulum resident protein 44.2 (413 aa).

The signal sequence occupies residues 1 to 21; that stretch reads MNLASVLLLLAACHLSVSVNG. In terms of domain architecture, Thioredoxin spans 22–136; it reads QEHKEAIELS…LTNFVKFQLS (115 aa). A disulfide bridge connects residues C184 and C233. N264 carries N-linked (GlcNAc...) asparagine glycosylation. A disordered region spans residues 367 to 413; the sequence is KAARGITDDHEAQAPSTRPIDTTPPPSVFKELKPSDKRYSILQKSEL. Positions 396 to 413 are enriched in basic and acidic residues; that stretch reads KELKPSDKRYSILQKSEL. The Prevents secretion from ER motif lies at 410–413; the sequence is KSEL.

It is found in the endoplasmic reticulum lumen. In Caenorhabditis elegans, this protein is Endoplasmic reticulum resident protein 44.2.